The sequence spans 134 residues: Large ribosomal subunit protein uL22 (134 aa).

It belongs to the universal ribosomal protein uL22 family. As to quaternary structure, part of the 50S ribosomal subunit.

This protein binds specifically to 23S rRNA; its binding is stimulated by other ribosomal proteins, e.g. L4, L17, and L20. It is important during the early stages of 50S assembly. It makes multiple contacts with different domains of the 23S rRNA in the assembled 50S subunit and ribosome. In terms of biological role, the globular domain of the protein is located near the polypeptide exit tunnel on the outside of the subunit, while an extended beta-hairpin is found that lines the wall of the exit tunnel in the center of the 70S ribosome. This chain is Large ribosomal subunit protein uL22, found in Rhodococcus erythropolis (strain PR4 / NBRC 100887).